We begin with the raw amino-acid sequence, 219 residues long: uncharacterized protein (219 aa).

This is an uncharacterized protein from Acanthamoeba polyphaga mimivirus (APMV).